The sequence spans 767 residues: Pre-mRNA-splicing factor ATP-dependent RNA helicase PRP43 (767 aa).

A disordered region spans residues 1–74; sequence MGSKRRFSSE…KLEDGKINPF (74 aa). Residues Ser8 and Ser9 each carry the phosphoserine modification. Residues 58-70 show a composition bias toward basic and acidic residues; sequence TSAEEAQKLEDGK. Positions 103–268 constitute a Helicase ATP-binding domain; sequence LKLYQNNQIM…FNDAPLLAVP (166 aa). Residue 116-123 participates in ATP binding; sequence GETGSGKT. The DEAH box motif lies at 215–218; it reads DEAH. The Helicase C-terminal domain occupies 293–473; that stretch reads TVLQIHATEE…STVLELKKLG (181 aa).

This sequence belongs to the DEAD box helicase family. DEAH subfamily. DDX15/PRP43 sub-subfamily. In terms of assembly, component of the NTR complex (NTC-related complex), composed of NTR1, NTR2 and PRP43. Interacts with NTR1 and NTR2. Interacts with SPP382.

Its subcellular location is the nucleus. It catalyses the reaction ATP + H2O = ADP + phosphate + H(+). Functionally, pre-mRNA processing factor involved in disassembly of spliceosomes after the release of mature mRNA. This Saccharomyces cerevisiae (strain ATCC 204508 / S288c) (Baker's yeast) protein is Pre-mRNA-splicing factor ATP-dependent RNA helicase PRP43 (PRP43).